Here is a 26-residue protein sequence, read N- to C-terminus: Acyl carrier protein (26 aa).

Positions 2-26 (SDIEQRIKQAVAEQLGMRAEEIKNE) constitute a Carrier domain.

This sequence belongs to the acyl carrier protein (ACP) family. In terms of processing, 4'-phosphopantetheine is transferred from CoA to a specific serine of apo-ACP by AcpS. This modification is essential for activity because fatty acids are bound in thioester linkage to the sulfhydryl of the prosthetic group.

It localises to the cytoplasm. It functions in the pathway lipid metabolism; fatty acid biosynthesis. Its function is as follows. Carrier of the growing fatty acid chain in fatty acid biosynthesis. The protein is Acyl carrier protein (acpP) of Acinetobacter calcoaceticus.